Reading from the N-terminus, the 148-residue chain is Arginine repressor (148 aa).

The protein belongs to the ArgR family.

It is found in the cytoplasm. It participates in amino-acid biosynthesis; L-arginine biosynthesis [regulation]. Its function is as follows. Regulates arginine biosynthesis genes. This chain is Arginine repressor, found in Pelodictyon phaeoclathratiforme (strain DSM 5477 / BU-1).